The chain runs to 446 residues: tRNA modification GTPase MnmE (446 aa).

Residues R24, E81, and K120 each contribute to the (6S)-5-formyl-5,6,7,8-tetrahydrofolate site. The TrmE-type G domain occupies 216-368 (GLHAVLIGPP…LHTRLRELAL (153 aa)). K(+) is bound at residue N226. Residues 226–231 (NAGKSS), 245–251 (TDVAGTT), and 270–273 (DTAG) each bind GTP. S230 contributes to the Mg(2+) binding site. K(+)-binding residues include T245, V247, and T250. A Mg(2+)-binding site is contributed by T251. Residue K446 coordinates (6S)-5-formyl-5,6,7,8-tetrahydrofolate.

Belongs to the TRAFAC class TrmE-Era-EngA-EngB-Septin-like GTPase superfamily. TrmE GTPase family. As to quaternary structure, homodimer. Heterotetramer of two MnmE and two MnmG subunits. K(+) serves as cofactor.

The protein localises to the cytoplasm. Its function is as follows. Exhibits a very high intrinsic GTPase hydrolysis rate. Involved in the addition of a carboxymethylaminomethyl (cmnm) group at the wobble position (U34) of certain tRNAs, forming tRNA-cmnm(5)s(2)U34. This chain is tRNA modification GTPase MnmE, found in Xanthomonas campestris pv. campestris (strain B100).